The sequence spans 443 residues: Xaa-Pro dipeptidase (443 aa).

The Mn(2+) site is built by Asp248, Asp259, His339, Glu384, and Glu423.

This sequence belongs to the peptidase M24B family. Bacterial-type prolidase subfamily. Requires Mn(2+) as cofactor.

The catalysed reaction is Xaa-L-Pro dipeptide + H2O = an L-alpha-amino acid + L-proline. Splits dipeptides with a prolyl residue in the C-terminal position. In Colwellia psychrerythraea (strain 34H / ATCC BAA-681) (Vibrio psychroerythus), this protein is Xaa-Pro dipeptidase.